The following is a 289-amino-acid chain: 1D-myo-inositol 2-acetamido-2-deoxy-alpha-D-glucopyranoside deacetylase 1 (289 aa).

The Zn(2+) site is built by H4, D7, and H140.

Belongs to the MshB deacetylase family. Zn(2+) is required as a cofactor.

It carries out the reaction 1D-myo-inositol 2-acetamido-2-deoxy-alpha-D-glucopyranoside + H2O = 1D-myo-inositol 2-amino-2-deoxy-alpha-D-glucopyranoside + acetate. Its function is as follows. Catalyzes the deacetylation of 1D-myo-inositol 2-acetamido-2-deoxy-alpha-D-glucopyranoside (GlcNAc-Ins) in the mycothiol biosynthesis pathway. This Frankia alni (strain DSM 45986 / CECT 9034 / ACN14a) protein is 1D-myo-inositol 2-acetamido-2-deoxy-alpha-D-glucopyranoside deacetylase 1.